Consider the following 519-residue polypeptide: Anthranilate synthase component 1 (519 aa).

L-tryptophan-binding positions include S39 and P290–M292. Position 327-328 (G327–T328) interacts with chorismate. Position 360 (E360) interacts with Mg(2+). Residues Y448, R468, G482–G484, and G484 each bind chorismate. Residue E497 participates in Mg(2+) binding.

The protein belongs to the anthranilate synthase component I family. In terms of assembly, heterotetramer consisting of two non-identical subunits: a beta subunit (TrpG) and a large alpha subunit (TrpE). Mg(2+) serves as cofactor.

The enzyme catalyses chorismate + L-glutamine = anthranilate + pyruvate + L-glutamate + H(+). It functions in the pathway amino-acid biosynthesis; L-tryptophan biosynthesis; L-tryptophan from chorismate: step 1/5. With respect to regulation, feedback inhibited by tryptophan. Functionally, part of a heterotetrameric complex that catalyzes the two-step biosynthesis of anthranilate, an intermediate in the biosynthesis of L-tryptophan. In the first step, the glutamine-binding beta subunit (TrpG) of anthranilate synthase (AS) provides the glutamine amidotransferase activity which generates ammonia as a substrate that, along with chorismate, is used in the second step, catalyzed by the large alpha subunit of AS (TrpE) to produce anthranilate. In the absence of TrpG, TrpE can synthesize anthranilate directly from chorismate and high concentrations of ammonia. The polypeptide is Anthranilate synthase component 1 (trpE) (Serratia marcescens).